The sequence spans 434 residues: RNA polymerase II holoenzyme cyclin-like subunit (434 aa).

One can recognise a Cyclin N-terminal domain in the interval 23–155; sequence EARRRVLLLE…LIEEMDSYLL (133 aa). The span at 248-278 shows a compositional bias: low complexity; it reads GSSTNPININNNNNTNTSNNNGTTSTTTTTT. 3 disordered regions span residues 248 to 292, 301 to 320, and 330 to 362; these read GSST…DNTE, LTKS…DIDN, and QIQN…GQIS. The span at 330–359 shows a compositional bias: low complexity; that stretch reads QIQNQTQHQHQESTHNNTSSTNTGRNGING.

The protein belongs to the cyclin family. Cyclin C subfamily. As to quaternary structure, component of the SRB8-11 complex, a regulatory module of the Mediator complex.

It localises to the nucleus. Functionally, component of the SRB8-11 complex. The SRB8-11 complex is a regulatory module of the Mediator complex which is itself involved in regulation of basal and activated RNA polymerase II-dependent transcription. The SRB8-11 complex may be involved in the transcriptional repression of a subset of genes regulated by Mediator. It may inhibit the association of the Mediator complex with RNA polymerase II to form the holoenzyme complex. The SRB8-11 complex phosphorylates the C-terminal domain (CTD) of the largest subunit of RNA polymerase II. This is RNA polymerase II holoenzyme cyclin-like subunit (SSN8) from Candida albicans (strain SC5314 / ATCC MYA-2876) (Yeast).